Consider the following 388-residue polypeptide: Chaperone protein DnaJ (388 aa).

In terms of domain architecture, J spans 6 to 71; the sequence is DYYEILGVPR…EKRKLYDQFG (66 aa). The segment at 147 to 229 adopts a CR-type zinc-finger fold; it reads GCEKEIPIYR…CGGTGNVRRQ (83 aa). Zn(2+)-binding residues include Cys-160, Cys-163, Cys-177, Cys-180, Cys-203, Cys-206, Cys-217, and Cys-220. 4 CXXCXGXG motif repeats span residues 160 to 167, 177 to 184, 203 to 210, and 217 to 224; these read CSVCGGSG, CQKCGGTG, CDACGGTG, and CRECGGTG.

It belongs to the DnaJ family. As to quaternary structure, homodimer. Requires Zn(2+) as cofactor.

The protein localises to the cytoplasm. Participates actively in the response to hyperosmotic and heat shock by preventing the aggregation of stress-denatured proteins and by disaggregating proteins, also in an autonomous, DnaK-independent fashion. Unfolded proteins bind initially to DnaJ; upon interaction with the DnaJ-bound protein, DnaK hydrolyzes its bound ATP, resulting in the formation of a stable complex. GrpE releases ADP from DnaK; ATP binding to DnaK triggers the release of the substrate protein, thus completing the reaction cycle. Several rounds of ATP-dependent interactions between DnaJ, DnaK and GrpE are required for fully efficient folding. Also involved, together with DnaK and GrpE, in the DNA replication of plasmids through activation of initiation proteins. The protein is Chaperone protein DnaJ of Caldicellulosiruptor bescii (strain ATCC BAA-1888 / DSM 6725 / KCTC 15123 / Z-1320) (Anaerocellum thermophilum).